The primary structure comprises 370 residues: MPSAKPLFCLATLAGAALAAPAPSRATDFNKRSTCTFTDAATASESKTSCSDIVLKDITVPAGETLNLKDLNDGTTVTFEGTTTWEYEEWDGPLLRISGKDITVTQSSDAVLNGNGAKWWDGEGTNGGKTKPKFFYAHDLDDSKISGLYIKNTPVQAISVESDNLVIEDVTIDNSDGDSEGGHNTDGFDISESTYITITGATVKNQDDCVAINSGENIYFSGGTCSGGHGLSIGSVGGRDDNTVKNVTFIDSTVSDSENGVRIKTVYDATGTVEDITYSNIQLSGISDYGIVIEQDYENGDPTGTPSNGVTISDVTLEDITGSVDSDAVEIYILCGDGSCTDWTMSGIDITGGETSSDCENVPSGASCSQ.

An N-terminal signal peptide occupies residues 1–19 (MPSAKPLFCLATLAGAALA). A propeptide spanning residues 20 to 32 (APAPSRATDFNKR) is cleaved from the precursor. A disulfide bridge links Cys-35 with Cys-50. PbH1 repeat units follow at residues 162–192 (SDNLVIEDVTIDNSDGDSEGGHNTDGFDISE), 193–214 (STYITITGATVKNQDDCVAINS), 215–235 (GENIYFSGGTCSGGHGLSIGS), 244–265 (VKNVTFIDSTVSDSENGVRIKT), 273–295 (VEDITYSNIQLSGISDYGIVIEQ), and 307–352 (SNGV…DITG). Asp-207 (proton donor) is an active-site residue. A disulfide bridge links Cys-209 with Cys-225. His-229 is a catalytic residue. An N-linked (GlcNAc...) asparagine glycan is attached at Asn-246. Cystine bridges form between Cys-335–Cys-340 and Cys-359–Cys-368.

It belongs to the glycosyl hydrolase 28 family.

The protein resides in the secreted. It carries out the reaction (1,4-alpha-D-galacturonosyl)n+m + H2O = (1,4-alpha-D-galacturonosyl)n + (1,4-alpha-D-galacturonosyl)m.. In terms of biological role, involved in maceration and soft-rotting of plant tissue. Hydrolyzes the 1,4-alpha glycosidic bonds of de-esterified pectate in the smooth region of the plant cell wall. This is Probable endopolygalacturonase A (pgaA) from Aspergillus kawachii (strain NBRC 4308) (White koji mold).